The primary structure comprises 454 residues: Serine--tRNA ligase (454 aa).

247 to 249 contributes to the L-serine binding site; the sequence is TAE. Residues 278 to 280 and valine 294 contribute to the ATP site; that span reads RKE. Position 301 (glutamate 301) interacts with L-serine. 365–368 contributes to the ATP binding site; the sequence is ELAS. Residue threonine 400 coordinates L-serine.

Belongs to the class-II aminoacyl-tRNA synthetase family. Type-1 seryl-tRNA synthetase subfamily. As to quaternary structure, homodimer. The tRNA molecule binds across the dimer.

The protein resides in the cytoplasm. The enzyme catalyses tRNA(Ser) + L-serine + ATP = L-seryl-tRNA(Ser) + AMP + diphosphate + H(+). It catalyses the reaction tRNA(Sec) + L-serine + ATP = L-seryl-tRNA(Sec) + AMP + diphosphate + H(+). Its pathway is aminoacyl-tRNA biosynthesis; selenocysteinyl-tRNA(Sec) biosynthesis; L-seryl-tRNA(Sec) from L-serine and tRNA(Sec): step 1/1. In terms of biological role, catalyzes the attachment of serine to tRNA(Ser). Is also able to aminoacylate tRNA(Sec) with serine, to form the misacylated tRNA L-seryl-tRNA(Sec), which will be further converted into selenocysteinyl-tRNA(Sec). This Pyrobaculum calidifontis (strain DSM 21063 / JCM 11548 / VA1) protein is Serine--tRNA ligase.